The sequence spans 486 residues: Siroheme synthase (486 aa).

Positions 1 to 203 (MNYFPIFANL…RQNTLAEREL (203 aa)) are precorrin-2 dehydrogenase /sirohydrochlorin ferrochelatase. Residues 22–23 (AV) and 43–44 (KH) each bind NAD(+). Position 128 is a phosphoserine (serine 128). The tract at residues 217-486 (GSVSLVGAGP…LGTGQEQQAA (270 aa)) is uroporphyrinogen-III C-methyltransferase. Proline 226 lines the S-adenosyl-L-methionine pocket. Residue aspartate 249 is the Proton acceptor of the active site. The Proton donor role is filled by lysine 271. S-adenosyl-L-methionine contacts are provided by residues 302–304 (GGD), valine 307, 332–333 (TA), methionine 384, and glycine 413.

This sequence in the N-terminal section; belongs to the precorrin-2 dehydrogenase / sirohydrochlorin ferrochelatase family. In the C-terminal section; belongs to the precorrin methyltransferase family.

It carries out the reaction uroporphyrinogen III + 2 S-adenosyl-L-methionine = precorrin-2 + 2 S-adenosyl-L-homocysteine + H(+). It catalyses the reaction precorrin-2 + NAD(+) = sirohydrochlorin + NADH + 2 H(+). The catalysed reaction is siroheme + 2 H(+) = sirohydrochlorin + Fe(2+). It participates in cofactor biosynthesis; adenosylcobalamin biosynthesis; precorrin-2 from uroporphyrinogen III: step 1/1. Its pathway is cofactor biosynthesis; adenosylcobalamin biosynthesis; sirohydrochlorin from precorrin-2: step 1/1. The protein operates within porphyrin-containing compound metabolism; siroheme biosynthesis; precorrin-2 from uroporphyrinogen III: step 1/1. It functions in the pathway porphyrin-containing compound metabolism; siroheme biosynthesis; siroheme from sirohydrochlorin: step 1/1. It participates in porphyrin-containing compound metabolism; siroheme biosynthesis; sirohydrochlorin from precorrin-2: step 1/1. Multifunctional enzyme that catalyzes the SAM-dependent methylations of uroporphyrinogen III at position C-2 and C-7 to form precorrin-2 via precorrin-1. Then it catalyzes the NAD-dependent ring dehydrogenation of precorrin-2 to yield sirohydrochlorin. Finally, it catalyzes the ferrochelation of sirohydrochlorin to yield siroheme. In Neisseria meningitidis serogroup A / serotype 4A (strain DSM 15465 / Z2491), this protein is Siroheme synthase.